A 546-amino-acid polypeptide reads, in one-letter code: Chaperonin GroEL (546 aa).

ATP is bound by residues 30-33, Lys51, 87-91, Gly415, 479-481, and Asp495; these read TLGP, DGTTT, and NAA.

The protein belongs to the chaperonin (HSP60) family. Forms a cylinder of 14 subunits composed of two heptameric rings stacked back-to-back. Interacts with the co-chaperonin GroES.

Its subcellular location is the cytoplasm. The enzyme catalyses ATP + H2O + a folded polypeptide = ADP + phosphate + an unfolded polypeptide.. Functionally, together with its co-chaperonin GroES, plays an essential role in assisting protein folding. The GroEL-GroES system forms a nano-cage that allows encapsulation of the non-native substrate proteins and provides a physical environment optimized to promote and accelerate protein folding. The chain is Chaperonin GroEL from Paraburkholderia phytofirmans (strain DSM 17436 / LMG 22146 / PsJN) (Burkholderia phytofirmans).